Consider the following 291-residue polypeptide: GTPase Era (291 aa).

The Era-type G domain occupies 2-167 (KSGFVSIIGR…LDEIVKYLDE (166 aa)). The interval 10-17 (GRTNAGKS) is G1. 10-17 (GRTNAGKS) is a GTP binding site. The tract at residues 36–40 (NATRR) is G2. The tract at residues 57–60 (DTPG) is G3. GTP contacts are provided by residues 57–61 (DTPGL) and 116–119 (NKVD). Residues 116–119 (NKVD) are G4. Residues 146-148 (YSS) form a G5 region. The KH type-2 domain maps to 186–274 (YRDFILESIY…LLKLFVTVKK (89 aa)).

The protein belongs to the TRAFAC class TrmE-Era-EngA-EngB-Septin-like GTPase superfamily. Era GTPase family. As to quaternary structure, monomer.

Its subcellular location is the cytoplasm. The protein localises to the cell inner membrane. An essential GTPase that binds both GDP and GTP, with rapid nucleotide exchange. Plays a role in 16S rRNA processing and 30S ribosomal subunit biogenesis and possibly also in cell cycle regulation and energy metabolism. The sequence is that of GTPase Era from Campylobacter jejuni (strain RM1221).